A 242-amino-acid chain; its full sequence is Large ribosomal subunit protein uL1 (242 aa).

Belongs to the universal ribosomal protein uL1 family. Part of the 50S ribosomal subunit.

Its function is as follows. Binds directly to 23S rRNA. The L1 stalk is quite mobile in the ribosome, and is involved in E site tRNA release. Functionally, protein L1 is also a translational repressor protein, it controls the translation of the L11 operon by binding to its mRNA. The sequence is that of Large ribosomal subunit protein uL1 from Wigglesworthia glossinidia brevipalpis.